Here is a 370-residue protein sequence, read N- to C-terminus: UDP-N-acetylglucosamine--N-acetylmuramyl-(pentapeptide) pyrophosphoryl-undecaprenol N-acetylglucosamine transferase (370 aa).

UDP-N-acetyl-alpha-D-glucosamine is bound by residues 15–17 (TGG), asparagine 129, arginine 170, serine 200, isoleucine 253, and glutamine 298.

Belongs to the glycosyltransferase 28 family. MurG subfamily.

The protein resides in the cell inner membrane. The catalysed reaction is di-trans,octa-cis-undecaprenyl diphospho-N-acetyl-alpha-D-muramoyl-L-alanyl-D-glutamyl-meso-2,6-diaminopimeloyl-D-alanyl-D-alanine + UDP-N-acetyl-alpha-D-glucosamine = di-trans,octa-cis-undecaprenyl diphospho-[N-acetyl-alpha-D-glucosaminyl-(1-&gt;4)]-N-acetyl-alpha-D-muramoyl-L-alanyl-D-glutamyl-meso-2,6-diaminopimeloyl-D-alanyl-D-alanine + UDP + H(+). Its pathway is cell wall biogenesis; peptidoglycan biosynthesis. Functionally, cell wall formation. Catalyzes the transfer of a GlcNAc subunit on undecaprenyl-pyrophosphoryl-MurNAc-pentapeptide (lipid intermediate I) to form undecaprenyl-pyrophosphoryl-MurNAc-(pentapeptide)GlcNAc (lipid intermediate II). This is UDP-N-acetylglucosamine--N-acetylmuramyl-(pentapeptide) pyrophosphoryl-undecaprenol N-acetylglucosamine transferase from Salinibacter ruber (strain DSM 13855 / M31).